Here is a 149-residue protein sequence, read N- to C-terminus: Large ribosomal subunit protein bL9 (149 aa).

This sequence belongs to the bacterial ribosomal protein bL9 family.

In terms of biological role, binds to the 23S rRNA. This Geobacillus stearothermophilus (Bacillus stearothermophilus) protein is Large ribosomal subunit protein bL9 (rplI).